Reading from the N-terminus, the 487-residue chain is b(0,+)-type amino acid transporter 1 (487 aa).

Residues 1 to 20 show a composition bias toward basic and acidic residues; the sequence is MEETSPRRRREDEKSVHSTE. The interval 1–23 is disordered; it reads MEETSPRRRREDEKSVHSTEPKT. The Cytoplasmic portion of the chain corresponds to 1–31; it reads MEETSPRRRREDEKSVHSTEPKTTSLQKEVG. Residue Ser18 is modified to Phosphoserine. Residues 32-55 form a helical membrane-spanning segment; sequence LLSGICIIVGTIIGSGIFISPKSV. Position 43–47 (43–47) interacts with L-arginine; the sequence is IIGSG. Over 56–62 the chain is Extracellular; the sequence is LANTESV. Residues 63 to 84 form a helical membrane-spanning segment; the sequence is GPCLIIWAACGVLATLGALCFA. At 85 to 110 the chain is on the cytoplasmic side; the sequence is ELGTMITKSGGEYPYLMEAFGPIPAY. The helical transmembrane segment at 111–137 threads the bilayer; it reads LFSWTSLIVMKPSSFAIICLSFSEYVC. At 138-147 the chain is on the extracellular side; the sequence is AAFYLGCRPP. 2 helical membrane passes run 148–169 and 170–193; these read AVVV…NALS and VRLG…IIII. Topologically, residues 194 to 217 are extracellular; sequence SGLVLLAQGNVKNFQNSFEGSQTS. The helical transmembrane segment at 218–238 threads the bilayer; it reads VGSISLAFYNGLWAYDGWNQL. An L-arginine-binding site is contributed by Asp233. Over 239 to 251 the chain is Cytoplasmic; the sequence is NYITEELRNPYRN. Residues 252–274 form a helical membrane-spanning segment; sequence LPMAIVIGIPLVTVCYILMNIAY. Topologically, residues 275–302 are extracellular; the sequence is FTVMTPTELLQSQAVAVTFGDRVLYPAS. A helical transmembrane segment spans residues 303-325; the sequence is WVVPLFVAFSTIGAANGTCFTAG. Topologically, residues 326 to 351 are cytoplasmic; sequence RLIYVAGREGHMLKVLSYISVKRLTP. Helical transmembrane passes span 352 to 370 and 371 to 391; these read APAL…IPGD and INSL…MTIL. Residues 392-410 lie on the Cytoplasmic side of the membrane; that stretch reads GLVVMRFTRKDLERPIKVP. The helical transmembrane segment at 411–431 threads the bilayer; it reads IFIPIIVILVSVFLILAPIIS. Topologically, residues 432 to 434 are extracellular; sequence SPA. Residues 435–450 traverse the membrane as a helical segment; the sequence is WEYLYCVLFILSGLIF. Residues 451 to 487 lie on the Cytoplasmic side of the membrane; sequence YFLFVHYKFRWAQKISRPITKHLQMLMEVVPPEKDPE.

This sequence belongs to the amino acid-polyamine-organocation (APC) superfamily. In terms of assembly, disulfide-linked heterodimer composed of the catalytic light chain subunit SLC7A9 and the heavy chain subunit SLC3A1. The heterodimer is the minimal functional unit. Assembles in heterotetramers (dimers of heterodimers) and higher order oligomers; the oligomerization is mediated by SLC3A1 likely to prevent degradation and facilitate heteromer trafficking to the plasma membrane. Interacts with CAV1. Outer medulla of kidney (at protein level). Kidney and small intestine. In the kidney localized to the apical membrane of the proximal tubules.

The protein localises to the apical cell membrane. The catalysed reaction is L-leucine(out) + L-arginine(in) = L-leucine(in) + L-arginine(out). It carries out the reaction L-histidine(out) + L-arginine(in) = L-histidine(in) + L-arginine(out). The enzyme catalyses L-arginine(in) + L-phenylalanine(out) = L-arginine(out) + L-phenylalanine(in). It catalyses the reaction L-cysteine(out) + L-arginine(in) = L-cysteine(in) + L-arginine(out). The catalysed reaction is L-cystine(out) + L-arginine(in) = L-cystine(in) + L-arginine(out). It carries out the reaction L-lysine(out) + L-arginine(in) = L-lysine(in) + L-arginine(out). Associates with SLC3A1 to form a functional transporter complex that mediates the electrogenic exchange between cationic amino acids and neutral amino acids, with a stoichiometry of 1:1. Has system b(0,+)-like activity with high affinity for extracellular cationic amino acids and L-cystine and lower affinity for intracellular neutral amino acids. Substrate exchange is driven by high concentration of intracellular neutral amino acids and the intracellular reduction of L-cystine to L-cysteine. Required for reabsorption of L-cystine and dibasic amino acids across the brush border membrane in renal proximal tubules. The polypeptide is b(0,+)-type amino acid transporter 1 (Slc7a9) (Rattus norvegicus (Rat)).